Consider the following 146-residue polypeptide: Large ribosomal subunit protein uL15 (146 aa).

Positions 1–58 (MNLSELRPAPGARKKPTRKGQGIGSGLGKTAGKGHKGQNARSGGGVRPGFEGGQMPLQ) are disordered. Gly residues-rich tracts occupy residues 21 to 31 (QGIGSGLGKTA) and 42 to 52 (SGGGVRPGFEG).

It belongs to the universal ribosomal protein uL15 family. Part of the 50S ribosomal subunit.

Binds to the 23S rRNA. The polypeptide is Large ribosomal subunit protein uL15 (Desulforamulus reducens (strain ATCC BAA-1160 / DSM 100696 / MI-1) (Desulfotomaculum reducens)).